We begin with the raw amino-acid sequence, 95 residues long: Large ribosomal subunit protein bL25 (95 aa).

It belongs to the bacterial ribosomal protein bL25 family. Part of the 50S ribosomal subunit; part of the 5S rRNA/L5/L18/L25 subcomplex. Contacts the 5S rRNA. Binds to the 5S rRNA independently of L5 and L18.

This is one of the proteins that binds to the 5S RNA in the ribosome where it forms part of the central protuberance. This Actinobacillus succinogenes (strain ATCC 55618 / DSM 22257 / CCUG 43843 / 130Z) protein is Large ribosomal subunit protein bL25.